The primary structure comprises 88 residues: MIAASIKAEVVKDNARAANDTGSPEVQVALLTARINELTPHFKTHAKDHHGRRGLLRMVSRRRKLLDYLKSKDADRYTALIAKLGLRK.

Belongs to the universal ribosomal protein uS15 family. Part of the 30S ribosomal subunit. Forms a bridge to the 50S subunit in the 70S ribosome, contacting the 23S rRNA.

Functionally, one of the primary rRNA binding proteins, it binds directly to 16S rRNA where it helps nucleate assembly of the platform of the 30S subunit by binding and bridging several RNA helices of the 16S rRNA. In terms of biological role, forms an intersubunit bridge (bridge B4) with the 23S rRNA of the 50S subunit in the ribosome. The chain is Small ribosomal subunit protein uS15 from Variovorax paradoxus (strain S110).